A 430-amino-acid chain; its full sequence is Tol-Pal system protein TolB (430 aa).

A signal peptide spans 1–21 (MKQAFRVALGFLILWASVLHA).

It belongs to the TolB family. The Tol-Pal system is composed of five core proteins: the inner membrane proteins TolA, TolQ and TolR, the periplasmic protein TolB and the outer membrane protein Pal. They form a network linking the inner and outer membranes and the peptidoglycan layer.

It is found in the periplasm. In terms of biological role, part of the Tol-Pal system, which plays a role in outer membrane invagination during cell division and is important for maintaining outer membrane integrity. TolB occupies a key intermediary position in the Tol-Pal system because it communicates directly with both membrane-embedded components, Pal in the outer membrane and TolA in the inner membrane. The sequence is that of Tol-Pal system protein TolB from Serratia proteamaculans (strain 568).